Here is a 199-residue protein sequence, read N- to C-terminus: Recombination protein RecR (199 aa).

The segment at 58-73 (CSICNNITDVDPCTYC) adopts a C4-type zinc-finger fold. The region spanning 81-176 (QVICVVEEPT…RVTRIATGVP (96 aa)) is the Toprim domain.

This sequence belongs to the RecR family.

Its function is as follows. May play a role in DNA repair. It seems to be involved in an RecBC-independent recombinational process of DNA repair. It may act with RecF and RecO. The protein is Recombination protein RecR of Koribacter versatilis (strain Ellin345).